The primary structure comprises 350 residues: Methylthioribose-1-phosphate isomerase (350 aa).

Residues 47–49, R89, and Q196 contribute to the substrate site; that span reads RGA. D237 (proton donor) is an active-site residue. A substrate-binding site is contributed by 247-248; sequence NK.

The protein belongs to the eIF-2B alpha/beta/delta subunits family. MtnA subfamily.

The catalysed reaction is 5-(methylsulfanyl)-alpha-D-ribose 1-phosphate = 5-(methylsulfanyl)-D-ribulose 1-phosphate. The protein operates within amino-acid biosynthesis; L-methionine biosynthesis via salvage pathway; L-methionine from S-methyl-5-thio-alpha-D-ribose 1-phosphate: step 1/6. In terms of biological role, catalyzes the interconversion of methylthioribose-1-phosphate (MTR-1-P) into methylthioribulose-1-phosphate (MTRu-1-P). This Nitratidesulfovibrio vulgaris (strain DSM 19637 / Miyazaki F) (Desulfovibrio vulgaris) protein is Methylthioribose-1-phosphate isomerase.